Here is a 353-residue protein sequence, read N- to C-terminus: L-tryptophan dehydrogenase (353 aa).

Residue Arg44 coordinates NAD(+). The active-site Proton donor/acceptor is the Lys80. Residues Asp114, Thr146, 176–181 (GLGNVG), Lys204, and 255–257 (AAN) each bind NAD(+).

The protein belongs to the Glu/Leu/Phe/Val dehydrogenases family. Homodimer.

It catalyses the reaction L-tryptophan + NAD(+) + H2O = indole-3-pyruvate + NH4(+) + NADH + H(+). Highly susceptible to inhibition by indole-3-pyruvate. Activity is not affected by the presence of metal ions, EDTA, KCl or DMSO. Its function is as follows. Catalyzes the reversible oxidative deamination of L-tryptophan to indole-3-pyruvate in the presence of NAD(+). Shows weak activity with L-phenylalanine, but cannot use other L-amino acids and D-Trp. Cannot use NADP(+) for oxidative deamination of L-Trp, and shows only weak activity with NADPH for reductive amination of indole-3-pyruvate. Involved in the biosynthesis of scytonemin, a cyanobacterial radiation-absorbing pigment. The chain is L-tryptophan dehydrogenase from Nostoc punctiforme.